Here is a 967-residue protein sequence, read N- to C-terminus: Serine/threonine-protein kinase 10 (967 aa).

2 positions are modified to phosphoserine: Ser-13 and Ser-20. Positions 36-294 constitute a Protein kinase domain; the sequence is WEILGELGDG…AAQLLQHPFV (259 aa). Residues 42–50 and Lys-65 each bind ATP; that span reads LGDGAFGKV. Asp-157 (proton acceptor) is an active-site residue. An activation segment region spans residues 175–224; it reads DFGVSAKNLKTLQKRDSFIGTPYWMAPEVVLCETMKDAPYDYKADIWSLG. Thr-185 carries the post-translational modification Phosphothreonine; by autocatalysis. Ser-191 is modified (phosphoserine; by autocatalysis). 2 disordered regions span residues 317 to 454 and 468 to 498; these read EIED…RPNS and GGLELPGSVTPNHSKRASDCSNLSTSESMDY. Polar residues-rich tracts occupy residues 339–364, 378–393, and 431–454; these read NHTQDSSANGTQPSLNSDKLLQDSST, PCNQPSGDGSPQNTSP, and TDQAENPSSAASKPPKVNQSRPNS. Phosphoserine is present on residues Ser-438, Ser-450, Ser-454, and Ser-485. The segment covering 486-498 has biased composition (polar residues); it reads DCSNLSTSESMDY. A phosphoserine mark is found at Ser-514 and Ser-549. Disordered regions lie at residues 827-866 and 902-967; these read INGAGSASEQREKVKQFSQQEEKRQKAERLQQQQKHENQM and LDES…GDAS. 2 stretches are compositionally biased toward basic and acidic residues: residues 835–866 and 902–947; these read EQREKVKQFSQQEEKRQKAERLQQQQKHENQM and LDES…EAET. At Thr-951 the chain carries Phosphothreonine.

It belongs to the protein kinase superfamily. STE Ser/Thr protein kinase family. STE20 subfamily. In terms of assembly, homodimer; homodimerization is required for activation segment autophosphorylation. In terms of processing, autophosphorylates following homodimerization, leading to activation of the protein.

Its subcellular location is the cell membrane. It catalyses the reaction L-seryl-[protein] + ATP = O-phospho-L-seryl-[protein] + ADP + H(+). The catalysed reaction is L-threonyl-[protein] + ATP = O-phospho-L-threonyl-[protein] + ADP + H(+). Inhibited by the pyrrole-indolinone inhibitor SU11274 (K00593): intercalates between the ATP-binding Lys-65 and alpha-C glutamate (Glu-81), resulting in a partial disordering of the lysine side chain. Also specifically inhibited by erlotinib. Slightly inhibited by gefitinib. Serine/threonine-protein kinase involved in regulation of lymphocyte migration. Phosphorylates MSN, and possibly PLK1. Involved in regulation of lymphocyte migration by mediating phosphorylation of ERM proteins such as MSN. Acts as a negative regulator of MAP3K1/MEKK1. May also act as a cell cycle regulator by acting as a polo kinase kinase: mediates phosphorylation of PLK1 in vitro; however such data require additional evidences in vivo. The sequence is that of Serine/threonine-protein kinase 10 (Stk10) from Rattus norvegicus (Rat).